A 467-amino-acid polypeptide reads, in one-letter code: Ankyrin repeat and SOCS box protein 10 (467 aa).

ANK repeat units follow at residues 115-144 (ELTT…KPDS), 147-176 (GGRT…DPNT), 180-209 (DGKR…QVDG), 214-243 (EEET…CPDV), 247-289 (EGWT…DADA), 293-322 (DKQR…NANA), and 326-361 (GGHT…AVRV). In terms of domain architecture, SOCS box spans 412–467 (YSSLFALVRQPRSLQHLCRCALRSHLEGCLPHALPRLPLPPRMLRFLQLDFEDLLY).

This sequence belongs to the ankyrin SOCS box (ASB) family.

The protein localises to the nucleus. The protein resides in the cytoplasm. Its pathway is protein modification; protein ubiquitination. May be a substrate-recognition component of a SCF-like ECS (Elongin-Cullin-SOCS-box protein) E3 ubiquitin-protein ligase complex which mediates the ubiquitination and subsequent proteasomal degradation of target proteins. In Mus musculus (Mouse), this protein is Ankyrin repeat and SOCS box protein 10 (Asb10).